The chain runs to 109 residues: Thiosulfate sulfurtransferase GlpE (109 aa).

A Rhodanese domain is found at 17–105; it reads HQQTAVLVDI…WHRHFPAEVA (89 aa). Residue cysteine 65 is the Cysteine persulfide intermediate of the active site.

The protein belongs to the GlpE family.

The protein localises to the cytoplasm. It catalyses the reaction thiosulfate + hydrogen cyanide = thiocyanate + sulfite + 2 H(+). It carries out the reaction thiosulfate + [thioredoxin]-dithiol = [thioredoxin]-disulfide + hydrogen sulfide + sulfite + 2 H(+). Transferase that catalyzes the transfer of sulfur from thiosulfate to thiophilic acceptors such as cyanide or dithiols. May function in a CysM-independent thiosulfate assimilation pathway by catalyzing the conversion of thiosulfate to sulfite, which can then be used for L-cysteine biosynthesis. The protein is Thiosulfate sulfurtransferase GlpE of Klebsiella pneumoniae subsp. pneumoniae (strain ATCC 700721 / MGH 78578).